The primary structure comprises 394 residues: Guanine nucleotide-binding protein G(s) subunit alpha (394 aa).

The tract at residues 1 to 23 (MGCLGNSKTEDQRNEEKAQREAN) is disordered. Residue glycine 2 is the site of N-palmitoyl glycine attachment. The S-palmitoyl cysteine moiety is linked to residue cysteine 3. Residues 8–23 (KTEDQRNEEKAQREAN) show a composition bias toward basic and acidic residues. The 356-residue stretch at 39–394 (ATHRLLLLGA…RMHLRQYELL (356 aa)) folds into the G-alpha domain. The tract at residues 42-55 (RLLLLGAGESGKST) is G1 motif. 47–55 (GAGESGKST) contacts GTP. Residue serine 54 participates in Mg(2+) binding. A disordered region spans residues 68–90 (FNGEGGEEDPQAARSNSDGEKAT). Residues 196-204 (DLLRCRVLT) are G2 motif. Residues 197 to 204 (LLRCRVLT), 223 to 227 (DVGGQ), 292 to 295 (NKQD), and alanine 366 each bind GTP. Threonine 204 is a binding site for Mg(2+). The interval 219 to 228 (FHMFDVGGQR) is G3 motif. The G4 motif stretch occupies residues 288 to 295 (ILFLNKQD). The interval 364 to 369 (TCAVDT) is G5 motif.

Belongs to the G-alpha family. G(s) subfamily. As to quaternary structure, heterotrimeric G proteins are composed of 3 units; alpha, beta and gamma. The alpha chain contains the guanine nucleotide binding site. Interacts with CRY1; the interaction may block GPCR-mediated regulation of cAMP concentrations. Interacts with ADCY6 and stimulates its adenylyl cyclase activity. Interacts with ADCY2 and ADCY5. Stimulates the ADCY5 adenylyl cyclase activity. Interaction with SASH1.

The protein resides in the cell membrane. Its function is as follows. Guanine nucleotide-binding proteins (G proteins) function as transducers in numerous signaling pathways controlled by G protein-coupled receptors (GPCRs). Signaling involves the activation of adenylyl cyclases, resulting in increased levels of the signaling molecule cAMP. GNAS functions downstream of several GPCRs, including beta-adrenergic receptors. Stimulates the Ras signaling pathway via RAPGEF2. The protein is Guanine nucleotide-binding protein G(s) subunit alpha (GNAS) of Cricetulus griseus (Chinese hamster).